Reading from the N-terminus, the 439-residue chain is Cobyrinate a,c-diamide synthase (439 aa).

The disordered stretch occupies residues 214-235; that stretch reads ETARAPPEVATTERNTGDSPAD. A GATase cobBQ-type domain is found at 237–428; the sequence is RVAVAQDSAF…CHCHGESGAF (192 aa). Residue Cys-317 is the Nucleophile of the active site.

It belongs to the CobB/CbiA family. Mg(2+) is required as a cofactor.

The enzyme catalyses cob(II)yrinate + 2 L-glutamine + 2 ATP + 2 H2O = cob(II)yrinate a,c diamide + 2 L-glutamate + 2 ADP + 2 phosphate + 2 H(+). Its pathway is cofactor biosynthesis; adenosylcobalamin biosynthesis; cob(II)yrinate a,c-diamide from sirohydrochlorin (anaerobic route): step 10/10. In terms of biological role, catalyzes the ATP-dependent amidation of the two carboxylate groups at positions a and c of cobyrinate, using either L-glutamine or ammonia as the nitrogen source. In Haloarcula marismortui (strain ATCC 43049 / DSM 3752 / JCM 8966 / VKM B-1809) (Halobacterium marismortui), this protein is Cobyrinate a,c-diamide synthase.